A 220-amino-acid polypeptide reads, in one-letter code: Inner membrane-spanning protein YciB (220 aa).

The next 6 helical transmembrane spans lie at Glu-20–Ala-40, Ile-57–Ala-77, Leu-86–Trp-106, Leu-123–Phe-143, Lys-156–Trp-176, and Phe-187–Ile-207.

Belongs to the YciB family.

It localises to the cell inner membrane. Its function is as follows. Plays a role in cell envelope biogenesis, maintenance of cell envelope integrity and membrane homeostasis. This is Inner membrane-spanning protein YciB from Brucella anthropi (strain ATCC 49188 / DSM 6882 / CCUG 24695 / JCM 21032 / LMG 3331 / NBRC 15819 / NCTC 12168 / Alc 37) (Ochrobactrum anthropi).